Reading from the N-terminus, the 1572-residue chain is E3 ubiquitin-protein ligase HECW2 (1572 aa).

S48 carries the post-translational modification Phosphoserine. The C2 domain maps to 167–301 (GAEGMEGGAS…QAIGDQMLSY (135 aa)). 2 disordered regions span residues 341–452 (VNSV…SSFP) and 489–796 (IMFS…PSVR). Residues 400-410 (TSTSSRTSPPR) are compositionally biased toward low complexity. The span at 518 to 532 (ASTHEAASFEDKPEN) shows a compositional bias: basic and acidic residues. 4 stretches are compositionally biased toward polar residues: residues 572 to 588 (EVDQPTSGADTGTSDAS), 597 to 614 (ETESLDQGSEPSQVSSET), 643 to 664 (SSCNESVTTQLSSVDTRCSSLE), and 688 to 703 (PTSSGPAEGSQESVCT). The interval 737–1068 (WQRRGSLEGA…PRPSSTFNTV (332 aa)) is interaction with TP73. Over residues 744–776 (EGAAAAAESPPQEEGSAGEAQGTCEGATAQEEG) the composition is skewed to low complexity. One can recognise a WW 1 domain in the interval 807–840 (EALPPNWEARIDSHGRIFYVDHVNRTTTWQRPTA). Positions 847 to 874 (LQRSNSIQQMEQLNRRYQSIRRTMTNER) form a coiled coil. Phosphoserine is present on residues S852 and S909. The WW 2 domain occupies 985–1018 (LELPRGWEMKHDHQGKAFFVDHNSRTTTFIDPRL). 2 disordered regions span residues 1024 to 1069 (RPTS…NTVS) and 1161 to 1187 (CQSPRGSPVSSPQNSPGTQRANARAPA). A compositionally biased stretch (basic residues) spans 1031-1040 (HRQHLTRQRS). Polar residues predominate over residues 1161–1181 (CQSPRGSPVSSPQNSPGTQRA). S1175 carries the post-translational modification Phosphoserine. An HECT domain is found at 1237 to 1572 (SRKDLQRNKL…VEETSTFGLE (336 aa)). C1540 (glycyl thioester intermediate) is an active-site residue.

Interacts with TP73. Interacts with FZR1. Ubiquitinated and degraded during mitotic exit by APC/C-Cdh1. As to expression, predominantly expressed in adult brain, lung and heart.

The protein localises to the cytoplasm. It localises to the cytoskeleton. The protein resides in the spindle. The catalysed reaction is S-ubiquitinyl-[E2 ubiquitin-conjugating enzyme]-L-cysteine + [acceptor protein]-L-lysine = [E2 ubiquitin-conjugating enzyme]-L-cysteine + N(6)-ubiquitinyl-[acceptor protein]-L-lysine.. Its pathway is protein modification; protein ubiquitination. Functionally, E3 ubiquitin-protein ligase that mediates ubiquitination of TP73. Acts to stabilize TP73 and enhance activation of transcription by TP73. Involved in the regulation of mitotic metaphase/anaphase transition. This is E3 ubiquitin-protein ligase HECW2 (HECW2) from Homo sapiens (Human).